The primary structure comprises 120 residues: ATP-dependent Clp protease adapter protein ClpS (120 aa).

The protein belongs to the ClpS family. Binds to the N-terminal domain of the chaperone ClpA.

Its function is as follows. Involved in the modulation of the specificity of the ClpAP-mediated ATP-dependent protein degradation. The protein is ATP-dependent Clp protease adapter protein ClpS of Azotobacter vinelandii (strain DJ / ATCC BAA-1303).